The sequence spans 672 residues: Acetoacetyl-CoA synthetase (672 aa).

This sequence belongs to the ATP-dependent AMP-binding enzyme family. In terms of tissue distribution, abundant in male subcutaneous white adipose tissue after weaning. In white adipose tissue, it is preferentially detected in mature adipocytes but not in preadipocytes. The expression in primary preadipocytes increases during the adipocyte differentiation. In brain, it is expressed in the midbrain, pons/medulla, cerebral cortex, hippocampus and cerebellum. The expression in the cerebellum is restricted primarily to glial cells, while in the cerebral cortex, it is restricted to neuronal cells.

The protein resides in the cytoplasm. It localises to the cytosol. The catalysed reaction is acetoacetate + ATP + CoA = acetoacetyl-CoA + AMP + diphosphate. Functionally, converts acetoacetate to acetoacetyl-CoA in the cytosol. Ketone body-utilizing enzyme, responsible for the synthesis of cholesterol and fatty acids. The polypeptide is Acetoacetyl-CoA synthetase (Aacs) (Rattus norvegicus (Rat)).